We begin with the raw amino-acid sequence, 544 residues long: MTKFIFVTGGVVSSLGKGIAAASIAAILESRGLNVTMLKLDPYINVDPGTMSPFQHGEVFVTDDGAETDLDLGHYERFIDSTMTRRNSFSTGQVYENVIAKERRGDYLGGTVQVIPHITDEIKRRIHEGAAGYDVAIVEIGGTVGDIESLPFLEAIRQMRSQLGRNNTLFAHLSYVPYIAAAGEIKTKPTQHTVKEMLSIGLQPDILICRMDRTMPADERRKIALFCNVEERAIVGSYDVDSIYECPEMLHDQGIDNIITEQLQLNVQQADLTAWKKIVHAIQNPKHTVKIAMVGKYVDLTESYKSLIEALKHAGIHTETDVQITFVDSESIEKNNGDVSMLKDMDAILVPGGFGSRGVEGKIAAVRYARENNVPYLGICLGMQIALIEYARDVAGLKGANSTEFDLKCAAPVVALIDEWQTADGSVETRDESADLGGTMRLGAQEVELKAGSLAAKIYGSEHIRERHRHRYEVNNNYVPTLEQAGLVIGGVSAGRERLVETIELPNHPWFFACQFHPEFTSNPRKGHPLFTAFVKAALNNKKA.

The tract at residues 1–265 (MTKFIFVTGG…DNIITEQLQL (265 aa)) is amidoligase domain. Residue Ser-13 coordinates CTP. Residue Ser-13 coordinates UTP. ATP-binding positions include 14–19 (SLGKGI) and Asp-71. Residues Asp-71 and Glu-139 each coordinate Mg(2+). CTP-binding positions include 146 to 148 (DIE), 186 to 191 (KTKPTQ), and Lys-222. Residues 186–191 (KTKPTQ) and Lys-222 each bind UTP. In terms of domain architecture, Glutamine amidotransferase type-1 spans 290–544 (KIAMVGKYVD…VKAALNNKKA (255 aa)). Position 353 (Gly-353) interacts with L-glutamine. Residue Cys-380 is the Nucleophile; for glutamine hydrolysis of the active site. L-glutamine is bound by residues 381-384 (LGMQ), Glu-404, and Arg-471. Catalysis depends on residues His-517 and Glu-519.

This sequence belongs to the CTP synthase family. Homotetramer.

The catalysed reaction is UTP + L-glutamine + ATP + H2O = CTP + L-glutamate + ADP + phosphate + 2 H(+). It carries out the reaction L-glutamine + H2O = L-glutamate + NH4(+). The enzyme catalyses UTP + NH4(+) + ATP = CTP + ADP + phosphate + 2 H(+). It participates in pyrimidine metabolism; CTP biosynthesis via de novo pathway; CTP from UDP: step 2/2. Its activity is regulated as follows. Allosterically activated by GTP, when glutamine is the substrate; GTP has no effect on the reaction when ammonia is the substrate. The allosteric effector GTP functions by stabilizing the protein conformation that binds the tetrahedral intermediate(s) formed during glutamine hydrolysis. Inhibited by the product CTP, via allosteric rather than competitive inhibition. Its function is as follows. Catalyzes the ATP-dependent amination of UTP to CTP with either L-glutamine or ammonia as the source of nitrogen. Regulates intracellular CTP levels through interactions with the four ribonucleotide triphosphates. The chain is CTP synthase from Neisseria meningitidis serogroup C / serotype 2a (strain ATCC 700532 / DSM 15464 / FAM18).